A 493-amino-acid chain; its full sequence is Ketol-acid reductoisomerase (NADP(+)) (493 aa).

Residues Leu14–Ser208 enclose the KARI N-terminal Rossmann domain. NADP(+) contacts are provided by residues Cys45–Gln48, Arg68, Arg76, Ser78, and Asp108–Gln110. His132 is an active-site residue. An NADP(+)-binding site is contributed by Gly158. KARI C-terminal knotted domains lie at Ser209 to Gly345 and Glu346 to Met486. Residues Asp217, Glu221, Glu390, and Glu394 each coordinate Mg(2+). Residue Ser415 coordinates substrate.

Belongs to the ketol-acid reductoisomerase family. Requires Mg(2+) as cofactor.

It carries out the reaction (2R)-2,3-dihydroxy-3-methylbutanoate + NADP(+) = (2S)-2-acetolactate + NADPH + H(+). It catalyses the reaction (2R,3R)-2,3-dihydroxy-3-methylpentanoate + NADP(+) = (S)-2-ethyl-2-hydroxy-3-oxobutanoate + NADPH + H(+). It functions in the pathway amino-acid biosynthesis; L-isoleucine biosynthesis; L-isoleucine from 2-oxobutanoate: step 2/4. The protein operates within amino-acid biosynthesis; L-valine biosynthesis; L-valine from pyruvate: step 2/4. Its function is as follows. Involved in the biosynthesis of branched-chain amino acids (BCAA). Catalyzes an alkyl-migration followed by a ketol-acid reduction of (S)-2-acetolactate (S2AL) to yield (R)-2,3-dihydroxy-isovalerate. In the isomerase reaction, S2AL is rearranged via a Mg-dependent methyl migration to produce 3-hydroxy-3-methyl-2-ketobutyrate (HMKB). In the reductase reaction, this 2-ketoacid undergoes a metal-dependent reduction by NADPH to yield (R)-2,3-dihydroxy-isovalerate. This is Ketol-acid reductoisomerase (NADP(+)) from Histophilus somni (strain 129Pt) (Haemophilus somnus).